Reading from the N-terminus, the 619-residue chain is CLPTM1-like membrane protein cnrB (619 aa).

The disordered stretch occupies residues 1–21 (MNNQGGAVAANGQRPQAQQQQ). Low complexity predominate over residues 9-21 (AANGQRPQAQQQQ). The next 6 helical transmembrane spans lie at 26 to 46 (IMGI…ASFA), 324 to 344 (WILG…FLAF), 360 to 380 (LSVK…LYLL), 384 to 404 (TSYM…WKLG), 445 to 465 (YLSW…LYYH), and 474 to 496 (VVSS…QLFI). The tract at residues 566-619 (SEEAEEVQQQDKKEIKEKVEEREEEKQEEEEEEKEKEEESTSSSKVTKRKTKKV) is disordered. Positions 574-590 (QQDKKEIKEKVEEREEE) are enriched in basic and acidic residues. The span at 591–605 (KQEEEEEEKEKEEES) shows a compositional bias: acidic residues.

The protein belongs to the CLPTM1 family.

The protein localises to the membrane. The chain is CLPTM1-like membrane protein cnrB (cnrB) from Dictyostelium discoideum (Social amoeba).